The primary structure comprises 134 residues: Holo-[acyl-carrier-protein] synthase (134 aa).

The Mg(2+) site is built by Asp8 and Glu58.

The protein belongs to the P-Pant transferase superfamily. AcpS family. Requires Mg(2+) as cofactor.

It localises to the cytoplasm. It carries out the reaction apo-[ACP] + CoA = holo-[ACP] + adenosine 3',5'-bisphosphate + H(+). Functionally, transfers the 4'-phosphopantetheine moiety from coenzyme A to a Ser of acyl-carrier-protein. The chain is Holo-[acyl-carrier-protein] synthase from Ruminiclostridium cellulolyticum (strain ATCC 35319 / DSM 5812 / JCM 6584 / H10) (Clostridium cellulolyticum).